The following is a 198-amino-acid chain: MTIIIIVLSYFLGSIPTGFLFGKFLKNIDLRLIGSGSTGATNVLRNVGKWPAFFVFIIDVGKGLLAVKLSQSYTNQHLFEVLAGISAVSGHIWPIWLKGKGGKAVATGLGMFIALSWKVGFASLGIFLIILSKSKIVSLSSILAAFFLPLFMFLDIGVTNHPYFLISLVVSILVILKHRTNIRRLIKGEESKINSLNK.

5 helical membrane-spanning segments follow: residues 1-21, 77-97, 111-131, 136-156, and 157-177; these read MTII…GFLF, HLFE…PIWL, MFIA…LIIL, IVSL…FLDI, and GVTN…VILK.

Belongs to the PlsY family. As to quaternary structure, probably interacts with PlsX.

It is found in the cell inner membrane. The catalysed reaction is an acyl phosphate + sn-glycerol 3-phosphate = a 1-acyl-sn-glycero-3-phosphate + phosphate. It functions in the pathway lipid metabolism; phospholipid metabolism. Functionally, catalyzes the transfer of an acyl group from acyl-phosphate (acyl-PO(4)) to glycerol-3-phosphate (G3P) to form lysophosphatidic acid (LPA). This enzyme utilizes acyl-phosphate as fatty acyl donor, but not acyl-CoA or acyl-ACP. This is Glycerol-3-phosphate acyltransferase from Prochlorococcus marinus (strain MIT 9515).